The primary structure comprises 319 residues: Transcription factor VBP (319 aa).

2 stretches are compositionally biased toward low complexity: residues 1-31 (MPGR…GAVA) and 143-158 (ASAS…STAV). Disordered stretches follow at residues 1–35 (MPGR…QQPE) and 139–186 (EKEP…DPDC). The segment covering 159 to 180 (YQQSEAASSTESPPQNERNTPS) has biased composition (polar residues). Residues 243–306 (DEKYWTRRKK…GRCKNIVSKY (64 aa)) form the bZIP domain. Positions 245–265 (KYWTRRKKNNVAAKRSRDARR) are basic motif. The tract at residues 266 to 273 (LKENQITI) is leucine-zipper.

The protein belongs to the bZIP family. PAR subfamily. In terms of assembly, binds DNA as a homodimer or a heterodimer. Exists as a stable dimer in the absence of DNA. In terms of tissue distribution, isoform 1 and isoform 3 are expressed in a variety of somatic tissues, including liver, heart, intestine, stomach and kidney. Both isoforms are also expressed in hepatoma (LMH) cells and in embryonic fibroblast cell lines. Isoform 2 and isoform 4 are expressed in adult heart and intestine.

It is found in the nucleus. Transcription factor that binds to and transactivates the vitellogenin II (VTG2) promoter. Binds to the palindromic sequence 5'-GTTTACATAAAC-3'. In Gallus gallus (Chicken), this protein is Transcription factor VBP (TEF).